The following is a 693-amino-acid chain: Triadin (693 aa).

The Cytoplasmic portion of the chain corresponds to 1–47; the sequence is MTEITAEGNASTTTTVIDNKNGCIPKSPGKVLKRSVTEDIVTTFSSP. The helical transmembrane segment at 48–68 threads the bilayer; it reads AAWLLVIALIITWSAVAIVMF. Over 69-693 the chain is Lumenal; that stretch reads DLVDYKNFSA…NSPGQKQQEQ (625 aa). Positions 117–130 are enriched in acidic residues; sequence EGDEDDEDADEDID. 3 disordered regions span residues 117–260, 278–649, and 666–693; these read EGDE…AVHE, GDLK…QTRP, and FQFP…QQEQ. Composition is skewed to basic and acidic residues over residues 131 to 241 and 249 to 260; these read KGEI…KETP and KKDDKEMPAVHE. A Phosphoserine modification is found at serine 301. A compositionally biased stretch (basic and acidic residues) spans 305-352; sequence LEEKEKEEKKKMEKKDTSDTKKKEKEVKKKSEETTIDGKGKEPGKPPE. Residues 354–364 show a composition bias toward polar residues; it reads KQMTAKLTTQA. 2 stretches are compositionally biased toward basic and acidic residues: residues 366-427 and 438-502; these read ARKD…KEEI and GKKE…KEAK. Asparagine 515 carries N-linked (GlcNAc...) asparagine glycosylation. Basic and acidic residues-rich tracts occupy residues 526–547 and 558–579; these read VKPE…DKPK and DSGK…REEN. The N-linked (GlcNAc...) asparagine glycan is linked to asparagine 584. Residues 587 to 637 show a composition bias toward basic and acidic residues; it reads KAEKPGKIPKDSKEAPASKKDKEDSKEAPTSKKDKEDSKDVPHSKKDKEVT. Residues 672 to 693 show a composition bias toward polar residues; sequence PVQQPGENPGKTNSPGQKQQEQ.

Homooligomer of variable subunit number; disulfide-linked. Interacts with CASQ1 and RYR1 in skeletal muscle. Interacts with CASQ2. Phosphorylated by CaMK2. Post-translationally, N-glycosylated. In terms of tissue distribution, detected in heart (at protein level). Detected in heart.

It localises to the sarcoplasmic reticulum membrane. Contributes to the regulation of lumenal Ca2+ release via the sarcoplasmic reticulum calcium release channels RYR1 and RYR2, a key step in triggering skeletal and heart muscle contraction. Required for normal organization of the triad junction, where T-tubules and the sarcoplasmic reticulum terminal cisternae are in close contact. Required for normal skeletal muscle strength. Plays a role in excitation-contraction coupling in the heart and in regulating the rate of heart beats. The chain is Triadin from Mus musculus (Mouse).